The primary structure comprises 274 residues: Putative pyruvate, phosphate dikinase regulatory protein 1 (274 aa).

149-156 (GISRTSKT) is a binding site for ADP.

The protein belongs to the pyruvate, phosphate/water dikinase regulatory protein family. PDRP subfamily.

It carries out the reaction N(tele)-phospho-L-histidyl/L-threonyl-[pyruvate, phosphate dikinase] + ADP = N(tele)-phospho-L-histidyl/O-phospho-L-threonyl-[pyruvate, phosphate dikinase] + AMP + H(+). It catalyses the reaction N(tele)-phospho-L-histidyl/O-phospho-L-threonyl-[pyruvate, phosphate dikinase] + phosphate + H(+) = N(tele)-phospho-L-histidyl/L-threonyl-[pyruvate, phosphate dikinase] + diphosphate. In terms of biological role, bifunctional serine/threonine kinase and phosphorylase involved in the regulation of the pyruvate, phosphate dikinase (PPDK) by catalyzing its phosphorylation/dephosphorylation. The protein is Putative pyruvate, phosphate dikinase regulatory protein 1 of Listeria welshimeri serovar 6b (strain ATCC 35897 / DSM 20650 / CCUG 15529 / CIP 8149 / NCTC 11857 / SLCC 5334 / V8).